The sequence spans 220 residues: 7-cyano-7-deazaguanine synthase (220 aa).

7–17 (LSGGMDSSITA) lines the ATP pocket. Residues cysteine 185, cysteine 193, cysteine 196, and cysteine 199 each coordinate Zn(2+).

The protein belongs to the QueC family. It depends on Zn(2+) as a cofactor.

It catalyses the reaction 7-carboxy-7-deazaguanine + NH4(+) + ATP = 7-cyano-7-deazaguanine + ADP + phosphate + H2O + H(+). It functions in the pathway purine metabolism; 7-cyano-7-deazaguanine biosynthesis. Catalyzes the ATP-dependent conversion of 7-carboxy-7-deazaguanine (CDG) to 7-cyano-7-deazaguanine (preQ(0)). This chain is 7-cyano-7-deazaguanine synthase, found in Nitratiruptor sp. (strain SB155-2).